Consider the following 415-residue polypeptide: 2-oxoadipate dioxygenase/decarboxylase (415 aa).

The 2-oxoadipate site is built by H66, R70, and H225. H66 contacts Fe(2+). Fe(2+) is bound by residues H225 and E296. Residue A361 participates in 2-oxoadipate binding.

This sequence belongs to the 2-oxoadipate dioxygenase/decarboxylase family. It depends on Fe(2+) as a cofactor.

The enzyme catalyses 2-oxoadipate + O2 = (R)-2-hydroxyglutarate + CO2. Functionally, catalyzes the decarboxylation and hydroxylation of 2-oxoadipate (2OA) to form D-2-hydroxyglutarate (D-2-HGA). This chain is 2-oxoadipate dioxygenase/decarboxylase, found in Mycobacterium bovis (strain ATCC BAA-935 / AF2122/97).